The following is a 113-amino-acid chain: Cell division protein FtsB (113 aa).

Over 1 to 3 (MRL) the chain is Cytoplasmic. Residues 4-21 (ISLLLFVLLLAIQYPLWL) traverse the membrane as a helical segment. Topologically, residues 22–113 (GKGGWLRVWE…PNSPAATGRH (92 aa)) are periplasmic. Residues 34–63 (HQVQEQATRNQMLKLRNAKLEGEVKDLQDG) are a coiled coil. A disordered region spans residues 93 to 113 (KVSATPPLPPPPNSPAATGRH).

The protein belongs to the FtsB family. Part of a complex composed of FtsB, FtsL and FtsQ.

It is found in the cell inner membrane. Essential cell division protein. May link together the upstream cell division proteins, which are predominantly cytoplasmic, with the downstream cell division proteins, which are predominantly periplasmic. This Cupriavidus pinatubonensis (strain JMP 134 / LMG 1197) (Cupriavidus necator (strain JMP 134)) protein is Cell division protein FtsB.